We begin with the raw amino-acid sequence, 893 residues long: Translation initiation factor IF-2 (893 aa).

Disordered regions lie at residues 135 to 169 (KAKA…KAEE) and 201 to 300 (ENEK…ESMD). Residues 201–224 (ENEKRWAEEEKARKEAEKTVDHHV) show a composition bias toward basic and acidic residues. A compositionally biased stretch (low complexity) spans 251–265 (PSANAGNNANANAGA). In terms of domain architecture, tr-type G spans 393–562 (SRAPVVTIMG…LLEAEVLELK (170 aa)). The segment at 402-409 (GHVDHGKT) is G1. Residue 402-409 (GHVDHGKT) coordinates GTP. Residues 427–431 (GITQH) form a G2 region. Positions 448 to 451 (DTPG) are G3. Residues 448-452 (DTPGH) and 502-505 (NKMD) contribute to the GTP site. A G4 region spans residues 502-505 (NKMD). The interval 538–540 (SAK) is G5.

It belongs to the TRAFAC class translation factor GTPase superfamily. Classic translation factor GTPase family. IF-2 subfamily.

The protein localises to the cytoplasm. Its function is as follows. One of the essential components for the initiation of protein synthesis. Protects formylmethionyl-tRNA from spontaneous hydrolysis and promotes its binding to the 30S ribosomal subunits. Also involved in the hydrolysis of GTP during the formation of the 70S ribosomal complex. This is Translation initiation factor IF-2 from Shewanella halifaxensis (strain HAW-EB4).